A 101-amino-acid polypeptide reads, in one-letter code: Protein Tat (101 aa).

The interval 1-24 (MEPVDPNLEPWKHPGSQPRTACNN) is interaction with human CREBBP. Positions 1-48 (MEPVDPNLEPWKHPGSQPRTACNNCYCKKCCFHCYACFTRKGLGISYG) are transactivation. Residues Cys22, Cys25, and Cys27 each contribute to the Zn(2+) site. The interval 22 to 37 (CNNCYCKKCCFHCYAC) is cysteine-rich. Lys28 bears the N6-acetyllysine; by host PCAF mark. Positions 30, 33, 34, and 37 each coordinate Zn(2+). The segment at 38–48 (FTRKGLGISYG) is core. Residues 48–57 (GRKKRRQRRR) are compositionally biased toward basic residues. The segment at 48 to 101 (GRKKRRQRRRAPQDSQTHQASLSKQPASQSRGDPTGPTESKKKVERETETDPFD) is disordered. A Nuclear localization signal, RNA-binding (TAR), and protein transduction motif is present at residues 49-57 (RKKRRQRRR). The segment at 49–86 (RKKRRQRRRAPQDSQTHQASLSKQPASQSRGDPTGPTE) is interaction with the host capping enzyme RNGTT. Residues Lys50 and Lys51 each carry the N6-acetyllysine; by host EP300 and GCN5L2 modification. 2 positions are modified to asymmetric dimethylarginine; by host PRMT6: Arg52 and Arg53. Positions 60–79 (QDSQTHQASLSKQPASQSRG) are enriched in polar residues. A Glycyl lysine isopeptide (Lys-Gly) (interchain with G-Cter in ubiquitin) cross-link involves residue Lys71. The short motif at 78 to 80 (RGD) is the Cell attachment site element. A compositionally biased stretch (basic and acidic residues) spans 86–101 (ESKKKVERETETDPFD).

Belongs to the lentiviruses Tat family. In terms of assembly, interacts with host CCNT1. Associates with the P-TEFb complex composed at least of Tat, P-TEFb (CDK9 and CCNT1), TAR RNA, RNA Pol II. Recruits the HATs CREBBP, TAF1/TFIID, EP300, PCAF and GCN5L2. Interacts with host KAT5/Tip60; this interaction targets the latter to degradation. Interacts with the host deacetylase SIRT1. Interacts with host capping enzyme RNGTT; this interaction stimulates RNGTT. Binds to host KDR, and to the host integrins ITGAV/ITGB3 and ITGA5/ITGB1. Interacts with host KPNB1/importin beta-1 without previous binding to KPNA1/importin alpha-1. Interacts with EIF2AK2. Interacts with host nucleosome assembly protein NAP1L1; this interaction may be required for the transport of Tat within the nucleus, since the two proteins interact at the nuclear rim. Interacts with host C1QBP/SF2P32; this interaction involves lysine-acetylated Tat. Interacts with the host chemokine receptors CCR2, CCR3 and CXCR4. Interacts with host DPP4/CD26; this interaction may trigger an anti-proliferative effect. Interacts with host LDLR. Interacts with the host extracellular matrix metalloproteinase MMP1. Interacts with host PRMT6; this interaction mediates Tat's methylation. Interacts with, and is ubiquitinated by MDM2/Hdm2. Interacts with host PSMC3 and HTATIP2. Interacts with STAB1; this interaction may overcome SATB1-mediated repression of IL2 and IL2RA (interleukin) in T cells by binding to the same domain than HDAC1. Interacts (when acetylated) with human CDK13, thereby increasing HIV-1 mRNA splicing and promoting the production of the doubly spliced HIV-1 protein Nef. Interacts with host TBP; this interaction modulates the activity of transcriptional pre-initiation complex. Interacts with host RELA. Interacts with host PLSCR1; this interaction negatively regulates Tat transactivation activity by altering its subcellular distribution. Post-translationally, asymmetrical arginine methylation by host PRMT6 seems to diminish the transactivation capacity of Tat and affects the interaction with host CCNT1. In terms of processing, acetylation by EP300, CREBBP, GCN5L2/GCN5 and PCAF regulates the transactivation activity of Tat. EP300-mediated acetylation of Lys-50 promotes dissociation of Tat from the TAR RNA through the competitive binding to PCAF's bromodomain. In addition, the non-acetylated Tat's N-terminus can also interact with PCAF. PCAF-mediated acetylation of Lys-28 enhances Tat's binding to CCNT1. Lys-50 is deacetylated by SIRT1. Polyubiquitination by host MDM2 does not target Tat to degradation, but activates its transactivation function and fosters interaction with CCNT1 and TAR RNA. Post-translationally, phosphorylated by EIF2AK2 on serine and threonine residues adjacent to the basic region important for TAR RNA binding and function. Phosphorylation of Tat by EIF2AK2 is dependent on the prior activation of EIF2AK2 by dsRNA.

It localises to the host nucleus. Its subcellular location is the host nucleolus. The protein localises to the host cytoplasm. It is found in the secreted. Functionally, transcriptional activator that increases RNA Pol II processivity, thereby increasing the level of full-length viral transcripts. Recognizes a hairpin structure at the 5'-LTR of the nascent viral mRNAs referred to as the transactivation responsive RNA element (TAR) and recruits the cyclin T1-CDK9 complex (P-TEFb complex) that will in turn hyperphosphorylate the RNA polymerase II to allow efficient elongation. The CDK9 component of P-TEFb and other Tat-activated kinases hyperphosphorylate the C-terminus of RNA Pol II that becomes stabilized and much more processive. Other factors such as HTATSF1/Tat-SF1, SUPT5H/SPT5, and HTATIP2 are also important for Tat's function. Besides its effect on RNA Pol II processivity, Tat induces chromatin remodeling of proviral genes by recruiting the histone acetyltransferases (HATs) CREBBP, EP300 and PCAF to the chromatin. This also contributes to the increase in proviral transcription rate, especially when the provirus integrates in transcriptionally silent region of the host genome. To ensure maximal activation of the LTR, Tat mediates nuclear translocation of NF-kappa-B by interacting with host RELA. Through its interaction with host TBP, Tat may also modulate transcription initiation. Tat can reactivate a latently infected cell by penetrating in it and transactivating its LTR promoter. In the cytoplasm, Tat is thought to act as a translational activator of HIV-1 mRNAs. Its function is as follows. Extracellular circulating Tat can be endocytosed by surrounding uninfected cells via the binding to several surface receptors such as CD26, CXCR4, heparan sulfate proteoglycans (HSPG) or LDLR. Neurons are rarely infected, but they internalize Tat via their LDLR. Through its interaction with nuclear HATs, Tat is potentially able to control the acetylation-dependent cellular gene expression. Modulates the expression of many cellular genes involved in cell survival, proliferation or in coding for cytokines or cytokine receptors. Tat plays a role in T-cell and neurons apoptosis. Tat induced neurotoxicity and apoptosis probably contribute to neuroAIDS. Circulating Tat also acts as a chemokine-like and/or growth factor-like molecule that binds to specific receptors on the surface of the cells, affecting many cellular pathways. In the vascular system, Tat binds to ITGAV/ITGB3 and ITGA5/ITGB1 integrins dimers at the surface of endothelial cells and competes with bFGF for heparin-binding sites, leading to an excess of soluble bFGF. The protein is Protein Tat of Homo sapiens (Human).